The sequence spans 232 residues: Large ribosomal subunit protein uL1 (232 aa).

Belongs to the universal ribosomal protein uL1 family. Part of the 50S ribosomal subunit.

Binds directly to 23S rRNA. The L1 stalk is quite mobile in the ribosome, and is involved in E site tRNA release. Its function is as follows. Protein L1 is also a translational repressor protein, it controls the translation of the L11 operon by binding to its mRNA. This is Large ribosomal subunit protein uL1 from Rhizobium rhizogenes (strain K84 / ATCC BAA-868) (Agrobacterium radiobacter).